Reading from the N-terminus, the 117-residue chain is Large ribosomal subunit protein bL20 (117 aa).

It belongs to the bacterial ribosomal protein bL20 family.

Binds directly to 23S ribosomal RNA and is necessary for the in vitro assembly process of the 50S ribosomal subunit. It is not involved in the protein synthesizing functions of that subunit. This is Large ribosomal subunit protein bL20 from Vibrio cholerae serotype O1 (strain ATCC 39541 / Classical Ogawa 395 / O395).